A 178-amino-acid chain; its full sequence is Major non-capsid protein (178 aa).

Belongs to the tenuiviruses NCP family.

The protein resides in the host cytoplasm. In terms of biological role, induces the formation of large intracellular inclusion body, organized in amorphous and crystalline arrays. Presumably the main cause of the stripe disease observed in host. This is Major non-capsid protein from Rice stripe virus (isolate T) (RSV).